The following is a 67-amino-acid chain: DNA-directed RNA polymerase subunit omega (67 aa).

The protein belongs to the RNA polymerase subunit omega family. As to quaternary structure, the RNAP catalytic core consists of 2 alpha, 1 beta, 1 beta' and 1 omega subunit. When a sigma factor is associated with the core the holoenzyme is formed, which can initiate transcription.

It catalyses the reaction RNA(n) + a ribonucleoside 5'-triphosphate = RNA(n+1) + diphosphate. Its function is as follows. Promotes RNA polymerase assembly. Latches the N- and C-terminal regions of the beta' subunit thereby facilitating its interaction with the beta and alpha subunits. This is DNA-directed RNA polymerase subunit omega from Albidiferax ferrireducens (strain ATCC BAA-621 / DSM 15236 / T118) (Rhodoferax ferrireducens).